Reading from the N-terminus, the 221-residue chain is uncharacterized protein (221 aa).

A run of 5 helical transmembrane segments spans residues 2-22 (FIAKSIVIGLLICVLFFFFFV), 34-54 (LLTLGLLNASLTALSDLLAQA), 97-117 (AYGLCLTPIQFRWFVALSNVI), 131-151 (ALDQFIFAPLGIVFFFLFMGI), and 177-197 (ILWPAVQLFNFTFVPLVLQVI).

Belongs to the peroxisomal membrane protein PXMP2/4 family.

It is found in the membrane. This is an uncharacterized protein from Schizosaccharomyces pombe (strain 972 / ATCC 24843) (Fission yeast).